We begin with the raw amino-acid sequence, 2376 residues long: Reducing polyketide synthase DEP5 (2376 aa).

Residues 47 to 477 (LEPIAVVGMG…GTNAHTIIES (431 aa)) enclose the Ketosynthase family 3 (KS3) domain. Active-site for beta-ketoacyl synthase activity residues include Cys221, His358, and His399. The malonyl-CoA:ACP transacylase (MAT) domain stretch occupies residues 593–906 (VFTGQGAQWA…QYLPTLVRGF (314 aa)). The active-site For malonyltransferase activity is Ser685. Residues 983–1121 (HDVLGQLTTG…GSIAIRTSAR (139 aa)) are N-terminal hotdog fold. The interval 983 to 1158 (HDVLGQLTTG…FNYGPTFQDM (176 aa)) is dehydratase (DH) domain. A PKS/mFAS DH domain is found at 983–1286 (HDVLGQLTTG…CIAYEAAIPQ (304 aa)). The active-site Proton acceptor; for dehydratase activity is His1015. The C-terminal hotdog fold stretch occupies residues 1131-1286 (LPQRASGRLW…CIAYEAAIPQ (156 aa)). Asp1195 functions as the Proton donor; for dehydratase activity in the catalytic mechanism. The interval 1659–1964 (GRIQAGKVVF…DSICDNKIVI (306 aa)) is enoyl reductase (ER) domain. Residues 1988–2163 (ATYLLVGCLG…KPACAVVLPM (176 aa)) form a ketoreductase (KR) domain region. The Carrier domain maps to 2289–2368 (DLVRDHFIAK…KFSELVCGAQ (80 aa)). O-(pantetheine 4'-phosphoryl)serine is present on Ser2327.

It functions in the pathway polyketide biosynthesis. Functionally, reducing polyketide synthase; part of the gene cluster that mediates the biosynthesis of depudecin, a highly oxidized eleven-carbon linear polyketide that acts as a histone deacetylase (HDAC) inhibitor and makes a small contribution to pathogenesis. The reducing polyketide synthase DEP5 is the central enzyme in depudecin biosynthesis by yielding the backbone polyketide chain. The monooxygenases DEP2 and DEP4, as well as the uncharacterized protein DEP1, then act as tailoring enzymes to modify the intermediate polyketide chain into depudecin. The protein is Reducing polyketide synthase DEP5 of Alternaria brassicicola (Dark leaf spot agent).